A 147-amino-acid chain; its full sequence is D-aminoacyl-tRNA deacylase (147 aa).

The short motif at 136-137 is the Gly-cisPro motif, important for rejection of L-amino acids element; it reads GP.

This sequence belongs to the DTD family. As to quaternary structure, homodimer.

It localises to the cytoplasm. The catalysed reaction is glycyl-tRNA(Ala) + H2O = tRNA(Ala) + glycine + H(+). It carries out the reaction a D-aminoacyl-tRNA + H2O = a tRNA + a D-alpha-amino acid + H(+). In terms of biological role, an aminoacyl-tRNA editing enzyme that deacylates mischarged D-aminoacyl-tRNAs. Also deacylates mischarged glycyl-tRNA(Ala), protecting cells against glycine mischarging by AlaRS. Acts via tRNA-based rather than protein-based catalysis; rejects L-amino acids rather than detecting D-amino acids in the active site. By recycling D-aminoacyl-tRNA to D-amino acids and free tRNA molecules, this enzyme counteracts the toxicity associated with the formation of D-aminoacyl-tRNA entities in vivo and helps enforce protein L-homochirality. In Persephonella marina (strain DSM 14350 / EX-H1), this protein is D-aminoacyl-tRNA deacylase.